The chain runs to 134 residues: Interleukin-5 (134 aa).

The N-terminal stretch at methionine 1–alanine 19 is a signal peptide. Threonine 22 carries O-linked (GalNAc...) threonine glycosylation. The N-linked (GlcNAc...) asparagine glycan is linked to asparagine 47.

This sequence belongs to the IL-5 family. As to quaternary structure, homodimer; disulfide-linked. Interacts with IL5RA. Interacts with CSF2RB. As to expression, present in peripheral blood mononuclear cells.

The protein resides in the secreted. Functionally, homodimeric cytokine expressed predominantly by T-lymphocytes and NK cells that plays an important role in the survival, differentiation, and chemotaxis of eosinophils. Also acts on activated and resting B-cells to induce immunoglobulin production, growth, and differentiation. Mechanistically, exerts its biological effects through a receptor composed of IL5RA subunit and the cytokine receptor common subunit beta/CSF2RB. Binding to the receptor leads to activation of various kinases including LYN, SYK and JAK2 and thereby propagates signals through the RAS-MAPK and JAK-STAT5 pathways respectively. The polypeptide is Interleukin-5 (IL5) (Homo sapiens (Human)).